We begin with the raw amino-acid sequence, 1710 residues long: Neurexin-2 (1710 aa).

A signal peptide spans Met1–Gly28. A Laminin G-like 1 domain is found at Leu29–Cys206. At Leu29–Thr1634 the chain is on the extracellular side. Asn60 is a glycosylation site (N-linked (GlcNAc...) asparagine). An EGF-like 1 domain is found at Ala202 to Ser242. Intrachain disulfides connect Cys206-Cys219, Cys213-Cys229, and Cys231-Cys241. 2 consecutive Laminin G-like domains span residues Val289–Cys486 and Asp493–Cys686. Asp335 contacts Ca(2+). A glycan (N-linked (GlcNAc...) asparagine) is linked at Asn338. Positions 352 and 420 each coordinate Ca(2+). Disulfide bonds link Cys450–Cys486, Cys657–Cys686, Cys694–Cys705, Cys699–Cys714, and Cys716–Cys726. The 38-residue stretch at Thr690–Glu727 folds into the EGF-like 2 domain. Laminin G-like domains are found at residues Val732–Cys904 and Asp918–Cys1093. Residues Asp779 and Leu796 each contribute to the Ca(2+) site. An N-linked (GlcNAc...) asparagine glycan is attached at Asn841. Ca(2+) is bound at residue Arg854. 4 disulfides stabilise this stretch: Cys1065-Cys1093, Cys1100-Cys1111, Cys1105-Cys1120, and Cys1122-Cys1132. One can recognise an EGF-like 3 domain in the interval Pro1096–Asn1133. The region spanning Thr1137 to Ser1345 is the Laminin G-like 6 domain. Positions 1189, 1206, 1288, and 1290 each coordinate Ca(2+). Ser1400 carries O-linked (Xyl...) (heparan sulfate) serine glycosylation. Disordered stretches follow at residues Ala1458–Thr1508 and Glu1587–Pro1621. The chain crosses the membrane as a helical span at residues Gly1635–Met1655. At Tyr1656–Val1710 the chain is on the cytoplasmic side. Residues Asn1677–Val1710 form a disordered region.

The laminin G-like domain 1 binds to NXPH1. Interacts with PATJ. Interacts with CBLN1, CBLN2 and, less avidly, with CBLN4. Specific isoforms bind neuroligins NLGN1, NLGN2 and NLGN3. Specific isoforms bind to alpha-dystroglycan. Interacts (via Laminin G-like 1 domain) with IGSF21 (Ig-like 1 domain) in a trans-interaction manner. Interacts with CLSTN3. O-glycosylated; contains heparan sulfate. Heparan sulfate attachment is required for synapse development by mediating interactions with neuroligins.

The protein localises to the presynaptic cell membrane. Its function is as follows. Neuronal cell surface protein that may be involved in cell recognition and cell adhesion. May mediate intracellular signaling. The sequence is that of Neurexin-2 from Mus musculus (Mouse).